A 183-amino-acid chain; its full sequence is NADH-quinone oxidoreductase subunit I (183 aa).

2 consecutive 4Fe-4S ferredoxin-type domains span residues 44–74 and 90–119; these read LNRWPDGLEKCIGCELCAWACPADAIYVEAG and RVYQINYLRCILCGLCVEACPTRALTMTNE. Cysteine 54, cysteine 57, cysteine 60, cysteine 64, cysteine 99, cysteine 102, cysteine 105, and cysteine 109 together coordinate [4Fe-4S] cluster. The interval 143-183 is disordered; that stretch reads QGMEAPPHPMRLGETEKDYYRLGRDDNAAARADEQNSEAVQ. The span at 153–176 shows a compositional bias: basic and acidic residues; the sequence is RLGETEKDYYRLGRDDNAAARADE.

Belongs to the complex I 23 kDa subunit family. As to quaternary structure, NDH-1 is composed of 14 different subunits. Subunits NuoA, H, J, K, L, M, N constitute the membrane sector of the complex. The cofactor is [4Fe-4S] cluster.

It is found in the cell membrane. The enzyme catalyses a quinone + NADH + 5 H(+)(in) = a quinol + NAD(+) + 4 H(+)(out). In terms of biological role, NDH-1 shuttles electrons from NADH, via FMN and iron-sulfur (Fe-S) centers, to quinones in the respiratory chain. The immediate electron acceptor for the enzyme in this species is believed to be ubiquinone. Couples the redox reaction to proton translocation (for every two electrons transferred, four hydrogen ions are translocated across the cytoplasmic membrane), and thus conserves the redox energy in a proton gradient. This chain is NADH-quinone oxidoreductase subunit I, found in Thermobifida fusca (strain YX).